The following is a 356-amino-acid chain: MKNIPTIVRNLGTINIRNNVGFSSVPDQVRESSMVKGFELNVLVVGRRGLGTSTLINSIFAAPLVDKKRTNNITATRNEIVENDISLEISIVTYHEANISPVLDYINAMNREYFDNEQGLYKAFKDNRVHVCLYLLPSDTLTDQEIKNMYELSQSCNLVPIIPKADMYTPDELADVKENVRQILSENNIFSFVPYLNENDGDLTEEVADIVGCMPFAVIASETMYEHGGEIIRGRKYPWGFINIDQEESNDFKRLQRLLIYTNLDELTMKTNHLFYNNYRKKIFEIENDCGAMKEARYLRLRTETIRILNDKYESRINALRKEEEEMERFYSEKIREMNDKMGEISKQVEKSLHVE.

Residues lysine 36 to isoleucine 286 form the Septin-type G domain. The G1 motif stretch occupies residues glycine 46 to serine 53. GTP is bound by residues glycine 46 to serine 53 and threonine 70. The G3 motif stretch occupies residues threonine 93–glutamate 96. The tract at residues proline 163 to aspartate 166 is G4 motif. GTP contacts are provided by residues lysine 164 to glutamate 172 and arginine 235.

Belongs to the TRAFAC class TrmE-Era-EngA-EngB-Septin-like GTPase superfamily. Septin GTPase family. As to quaternary structure, component of the septin complex.

Functionally, septins are GTPases involved in cytokinesis. The septins localize to the site of cleavage and act as a structural scaffold that recruits different components involved in diverse processes at specific stages during the cell cycle. Septins are also involved in cell morphogenesis, chitin deposition, cell cycle regulation, cell compartmentalization and spore wall formation. In Encephalitozoon cuniculi (strain GB-M1) (Microsporidian parasite), this protein is Cell division control protein 10 (CDC10).